Here is a 510-residue protein sequence, read N- to C-terminus: UDP-N-acetylmuramoylalanine--D-glutamate ligase (510 aa).

An ATP-binding site is contributed by 138–144 (GTNGKTT). Residues 294–316 (FDEPAPAPRRKKDAPPPTRAGGR) form a disordered region.

The protein belongs to the MurCDEF family.

The protein resides in the cytoplasm. The catalysed reaction is UDP-N-acetyl-alpha-D-muramoyl-L-alanine + D-glutamate + ATP = UDP-N-acetyl-alpha-D-muramoyl-L-alanyl-D-glutamate + ADP + phosphate + H(+). Its pathway is cell wall biogenesis; peptidoglycan biosynthesis. In terms of biological role, cell wall formation. Catalyzes the addition of glutamate to the nucleotide precursor UDP-N-acetylmuramoyl-L-alanine (UMA). The chain is UDP-N-acetylmuramoylalanine--D-glutamate ligase from Bordetella bronchiseptica (strain ATCC BAA-588 / NCTC 13252 / RB50) (Alcaligenes bronchisepticus).